The chain runs to 254 residues: 3-deoxy-manno-octulosonate cytidylyltransferase (254 aa).

Belongs to the KdsB family.

Its subcellular location is the cytoplasm. The enzyme catalyses 3-deoxy-alpha-D-manno-oct-2-ulosonate + CTP = CMP-3-deoxy-beta-D-manno-octulosonate + diphosphate. It participates in nucleotide-sugar biosynthesis; CMP-3-deoxy-D-manno-octulosonate biosynthesis; CMP-3-deoxy-D-manno-octulosonate from 3-deoxy-D-manno-octulosonate and CTP: step 1/1. Its pathway is bacterial outer membrane biogenesis; lipopolysaccharide biosynthesis. Activates KDO (a required 8-carbon sugar) for incorporation into bacterial lipopolysaccharide in Gram-negative bacteria. The sequence is that of 3-deoxy-manno-octulosonate cytidylyltransferase from Haemophilus influenzae (strain PittGG).